Here is a 164-residue protein sequence, read N- to C-terminus: Translocator protein homolog (164 aa).

The next 5 membrane-spanning stretches (helical) occupy residues 16-34 (WSAS…NSYK), 52-72 (SAFG…SHLA), 89-106 (ILYI…PLFY), 112-132 (KLAL…AKTW), and 141-163 (KWLI…YCLL).

It belongs to the TspO/BZRP family.

Its subcellular location is the mitochondrion membrane. Its function is as follows. May play a role in the transport of porphyrins and heme. This Schizosaccharomyces pombe (strain 972 / ATCC 24843) (Fission yeast) protein is Translocator protein homolog.